A 313-amino-acid polypeptide reads, in one-letter code: Ribonuclease HIII (313 aa).

The 217-residue stretch at 94 to 310 (MSVIGSDEVG…TQKAKRLVER (217 aa)) folds into the RNase H type-2 domain. 3 residues coordinate a divalent metal cation: Asp-100, Glu-101, and Asp-205.

It belongs to the RNase HII family. RnhC subfamily. Mn(2+) serves as cofactor. Requires Mg(2+) as cofactor.

It is found in the cytoplasm. The catalysed reaction is Endonucleolytic cleavage to 5'-phosphomonoester.. Functionally, endonuclease that specifically degrades the RNA of RNA-DNA hybrids. The sequence is that of Ribonuclease HIII from Bacillus velezensis (strain DSM 23117 / BGSC 10A6 / LMG 26770 / FZB42) (Bacillus amyloliquefaciens subsp. plantarum).